Here is a 396-residue protein sequence, read N- to C-terminus: Elongation factor Tu (396 aa).

The 197-residue stretch at 10 to 206 (KPHCNIGTIG…AVDAYIPQPE (197 aa)) folds into the tr-type G domain. The G1 stretch occupies residues 19-26 (GHVDHGKT). Residue 19 to 26 (GHVDHGKT) participates in GTP binding. A Mg(2+)-binding site is contributed by Thr26. Residues 60-64 (GITIS) form a G2 region. The G3 stretch occupies residues 81 to 84 (DCPG). GTP is bound by residues 81–85 (DCPGH) and 136–139 (NKCD). A G4 region spans residues 136-139 (NKCD). The interval 174–176 (SAL) is G5.

This sequence belongs to the TRAFAC class translation factor GTPase superfamily. Classic translation factor GTPase family. EF-Tu/EF-1A subfamily. Monomer.

It localises to the cytoplasm. The enzyme catalyses GTP + H2O = GDP + phosphate + H(+). Its function is as follows. GTP hydrolase that promotes the GTP-dependent binding of aminoacyl-tRNA to the A-site of ribosomes during protein biosynthesis. The chain is Elongation factor Tu from Rhodopseudomonas palustris (strain HaA2).